A 131-amino-acid polypeptide reads, in one-letter code: Small ribosomal subunit protein uS8 (131 aa).

This sequence belongs to the universal ribosomal protein uS8 family. Part of the 30S ribosomal subunit. Contacts proteins S5 and S12.

One of the primary rRNA binding proteins, it binds directly to 16S rRNA central domain where it helps coordinate assembly of the platform of the 30S subunit. This Campylobacter jejuni subsp. jejuni serotype O:23/36 (strain 81-176) protein is Small ribosomal subunit protein uS8.